The primary structure comprises 283 residues: tRNA-cytidine(32) 2-sulfurtransferase (283 aa).

A PP-loop motif motif is present at residues 49–54 (SGGKDS). Residues Cys124, Cys127, and Cys215 each contribute to the [4Fe-4S] cluster site.

Belongs to the TtcA family. In terms of assembly, homodimer. The cofactor is Mg(2+). [4Fe-4S] cluster is required as a cofactor.

Its subcellular location is the cytoplasm. It catalyses the reaction cytidine(32) in tRNA + S-sulfanyl-L-cysteinyl-[cysteine desulfurase] + AH2 + ATP = 2-thiocytidine(32) in tRNA + L-cysteinyl-[cysteine desulfurase] + A + AMP + diphosphate + H(+). It functions in the pathway tRNA modification. Functionally, catalyzes the ATP-dependent 2-thiolation of cytidine in position 32 of tRNA, to form 2-thiocytidine (s(2)C32). The sulfur atoms are provided by the cysteine/cysteine desulfurase (IscS) system. The chain is tRNA-cytidine(32) 2-sulfurtransferase from Acaryochloris marina (strain MBIC 11017).